Consider the following 413-residue polypeptide: Amino acid transporter AVT3B (413 aa).

Topologically, residues 1–27 are cytoplasmic; it reads MGLEEQGRAREDTPLLGKGRPLSSKFK. A helical transmembrane segment spans residues 28–48; sequence TFANVFIAIVGAGVLGLPYAF. Residues 49–54 lie on the Vacuolar side of the membrane; sequence KRTGWL. Residues 55-75 form a helical membrane-spanning segment; sequence MGLLTLFSVAALINHCMMLLV. Over 76–103 the chain is Cytoplasmic; sequence HIRRKLGVSNIGSFGDLGFAACGNLGRF. A helical membrane pass occupies residues 104–124; it reads VVDILIILSQAGFCVGYLIFI. Residues 125 to 145 lie on the Vacuolar side of the membrane; sequence GNTLANLSKPTKSTTLMSLRH. Residues 146 to 166 form a helical membrane-spanning segment; the sequence is LMGVSPKSLYIWGCFPFQLGL. The Cytoplasmic segment spans residues 167 to 174; the sequence is NSIKTLTH. Residues 175-195 form a helical membrane-spanning segment; it reads LAPLSIFADVVDLGAMAVVIV. Over 196–207 the chain is Vacuolar; that stretch reads EDIKITVVQRPQ. The helical transmembrane segment at 208 to 228 threads the bilayer; the sequence is VVAFGGMSVFFYGMGVAVYAF. Over 229–249 the chain is Cytoplasmic; it reads EGVGMVLPLESETKDKDKFGK. The chain crosses the membrane as a helical span at residues 250–270; it reads VLALSMLFIAVMYGSFGVLGY. Residues 271-288 lie on the Vacuolar side of the membrane; the sequence is MAFGDDTMDIITANLGAG. A helical membrane pass occupies residues 289–309; it reads VVSSLVQLGLCINLFFTFPLM. Topologically, residues 310 to 331 are cytoplasmic; it reads MNPVFEIVERRFWSGMYCVWLR. Residues 332–352 form a helical membrane-spanning segment; it reads WLLVLAVTLVALLVPNFADFL. Over 353–355 the chain is Vacuolar; sequence SLV. The helical transmembrane segment at 356–376 threads the bilayer; the sequence is GSSVCCALGFVLPSLFHLMVF. Residues 377–390 are Cytoplasmic-facing; it reads KDEMEWKQRALDVG. Residues 391-411 form a helical membrane-spanning segment; sequence ILLLGVILGVSGTWSSLTEIF. Over 412–413 the chain is Vacuolar; the sequence is QE.

The protein belongs to the amino acid/polyamine transporter 2 family. Amino acid/auxin permease (AAAP) (TC 2.A.18.8) subfamily. As to expression, ubiquitous.

It is found in the vacuole membrane. Functionally, translocates preferentially neutral amino acids from the vacuole to the cytoplasm. In Arabidopsis thaliana (Mouse-ear cress), this protein is Amino acid transporter AVT3B.